The following is a 309-amino-acid chain: Ornithine carbamoyltransferase (309 aa).

Carbamoyl phosphate contacts are provided by residues 51-54 (STRT), Gln78, Arg102, and 129-132 (HPVQ). L-ornithine-binding positions include Asn160, Asp224, and 228–229 (SM). Carbamoyl phosphate is bound by residues 264 to 265 (CL) and Arg292.

This sequence belongs to the aspartate/ornithine carbamoyltransferase superfamily. OTCase family.

Its subcellular location is the cytoplasm. The catalysed reaction is carbamoyl phosphate + L-ornithine = L-citrulline + phosphate + H(+). The protein operates within amino-acid biosynthesis; L-arginine biosynthesis; L-arginine from L-ornithine and carbamoyl phosphate: step 1/3. Reversibly catalyzes the transfer of the carbamoyl group from carbamoyl phosphate (CP) to the N(epsilon) atom of ornithine (ORN) to produce L-citrulline. The polypeptide is Ornithine carbamoyltransferase (Campylobacter fetus subsp. fetus (strain 82-40)).